Reading from the N-terminus, the 105-residue chain is Large ribosomal subunit protein uL24 (105 aa).

This sequence belongs to the universal ribosomal protein uL24 family. In terms of assembly, part of the 50S ribosomal subunit.

Its function is as follows. One of two assembly initiator proteins, it binds directly to the 5'-end of the 23S rRNA, where it nucleates assembly of the 50S subunit. In terms of biological role, one of the proteins that surrounds the polypeptide exit tunnel on the outside of the subunit. The polypeptide is Large ribosomal subunit protein uL24 (Rhizorhabdus wittichii (strain DSM 6014 / CCUG 31198 / JCM 15750 / NBRC 105917 / EY 4224 / RW1) (Sphingomonas wittichii)).